The following is a 123-amino-acid chain: Kininogen (123 aa).

Bradykinin is released from kininogen by kallikrein. Post-translationally, N-glycosylated. Contains sulfated N-acetylglucosamine and O-acetylated sialic acids as terminal elements on biantennary and triantennary N-glycans.

Functionally, inhibits papain and ficin (cysteine proteinases) but not trypsin (a serine proteinase). The protein is Kininogen of Gadus morhua (Atlantic cod).